The following is a 485-amino-acid chain: Rhamnulokinase (485 aa).

Residue 10–14 (ASSGR) coordinates ATP. Residues alanine 78 and 233-235 (HDT) each bind substrate. Aspartate 234 functions as the Proton acceptor in the catalytic mechanism. Threonine 256 is an ATP binding site. Asparagine 293 lines the substrate pocket. Residue glutamine 301 coordinates ATP. A disulfide bridge connects residues cysteine 351 and cysteine 368. Glycine 400 lines the ATP pocket.

It belongs to the rhamnulokinase family. Mg(2+) serves as cofactor.

It carries out the reaction L-rhamnulose + ATP = L-rhamnulose 1-phosphate + ADP + H(+). It participates in carbohydrate degradation; L-rhamnose degradation; glycerone phosphate from L-rhamnose: step 2/3. Involved in the catabolism of L-rhamnose (6-deoxy-L-mannose). Catalyzes the transfer of the gamma-phosphate group from ATP to the 1-hydroxyl group of L-rhamnulose to yield L-rhamnulose 1-phosphate. The chain is Rhamnulokinase from Bacillus subtilis (strain 168).